Here is a 389-residue protein sequence, read N- to C-terminus: Arrestin-C (389 aa).

A disordered region spans residues 369–389 (AQQEPSGESQEALAAEGNEGS).

It belongs to the arrestin family. In terms of assembly, homodimer; disulfide-linked in response to retinal illumination. Interacts with CXCR4; the interaction is dependent on the C-terminal phosphorylation of CXCR4 and modulates the calcium ion mobilization activity of CXCR4. Interacts with GPR84. As to expression, expressed in cone photoreceptors in the retina (at protein level).

The protein resides in the photoreceptor inner segment. It is found in the cell projection. Its subcellular location is the cilium. The protein localises to the photoreceptor outer segment. Its function is as follows. May play a role in an as yet undefined retina-specific signal transduction. Could bind to photoactivated-phosphorylated red/green opsins. This chain is Arrestin-C (ARR3), found in Bos taurus (Bovine).